The following is a 325-amino-acid chain: 4-hydroxy-3-methylbut-2-enyl diphosphate reductase (325 aa).

C13 lines the [4Fe-4S] cluster pocket. (2E)-4-hydroxy-3-methylbut-2-enyl diphosphate-binding residues include H42 and H76. Dimethylallyl diphosphate-binding residues include H42 and H76. H42 and H76 together coordinate isopentenyl diphosphate. Residue C98 coordinates [4Fe-4S] cluster. H126 is a binding site for (2E)-4-hydroxy-3-methylbut-2-enyl diphosphate. Position 126 (H126) interacts with dimethylallyl diphosphate. H126 provides a ligand contact to isopentenyl diphosphate. E128 functions as the Proton donor in the catalytic mechanism. T169 contributes to the (2E)-4-hydroxy-3-methylbut-2-enyl diphosphate binding site. C230 is a binding site for [4Fe-4S] cluster. Residues S258, S259, N260, and S306 each contribute to the (2E)-4-hydroxy-3-methylbut-2-enyl diphosphate site. Dimethylallyl diphosphate-binding residues include S258, S259, N260, and S306. Isopentenyl diphosphate-binding residues include S258, S259, N260, and S306.

It belongs to the IspH family. It depends on [4Fe-4S] cluster as a cofactor.

The catalysed reaction is isopentenyl diphosphate + 2 oxidized [2Fe-2S]-[ferredoxin] + H2O = (2E)-4-hydroxy-3-methylbut-2-enyl diphosphate + 2 reduced [2Fe-2S]-[ferredoxin] + 2 H(+). It catalyses the reaction dimethylallyl diphosphate + 2 oxidized [2Fe-2S]-[ferredoxin] + H2O = (2E)-4-hydroxy-3-methylbut-2-enyl diphosphate + 2 reduced [2Fe-2S]-[ferredoxin] + 2 H(+). It functions in the pathway isoprenoid biosynthesis; dimethylallyl diphosphate biosynthesis; dimethylallyl diphosphate from (2E)-4-hydroxy-3-methylbutenyl diphosphate: step 1/1. The protein operates within isoprenoid biosynthesis; isopentenyl diphosphate biosynthesis via DXP pathway; isopentenyl diphosphate from 1-deoxy-D-xylulose 5-phosphate: step 6/6. Its function is as follows. Catalyzes the conversion of 1-hydroxy-2-methyl-2-(E)-butenyl 4-diphosphate (HMBPP) into a mixture of isopentenyl diphosphate (IPP) and dimethylallyl diphosphate (DMAPP). Acts in the terminal step of the DOXP/MEP pathway for isoprenoid precursor biosynthesis. This chain is 4-hydroxy-3-methylbut-2-enyl diphosphate reductase, found in Prosthecochloris aestuarii (strain DSM 271 / SK 413).